A 458-amino-acid polypeptide reads, in one-letter code: UDP-N-acetylmuramate--L-alanine ligase (458 aa).

An ATP-binding site is contributed by 118-124; that stretch reads GTHGKTT.

This sequence belongs to the MurCDEF family.

It is found in the cytoplasm. It carries out the reaction UDP-N-acetyl-alpha-D-muramate + L-alanine + ATP = UDP-N-acetyl-alpha-D-muramoyl-L-alanine + ADP + phosphate + H(+). Its pathway is cell wall biogenesis; peptidoglycan biosynthesis. Cell wall formation. The sequence is that of UDP-N-acetylmuramate--L-alanine ligase from Clostridium botulinum (strain Okra / Type B1).